A 504-amino-acid chain; its full sequence is Putative BTB/POZ domain-containing protein R842 (504 aa).

One can recognise a BTB domain in the interval 21–91; sequence SDVKLILKDN…FYGFKSPSVT (71 aa).

Belongs to the mimivirus BTB/WD family.

The protein is Putative BTB/POZ domain-containing protein R842 of Acanthamoeba polyphaga (Amoeba).